Reading from the N-terminus, the 177-residue chain is Protein FATTY ACID EXPORT 4, chloroplastic (177 aa).

A chloroplast-targeting transit peptide spans Met-1–Val-63. 3 helical membrane-spanning segments follow: residues Lys-85–Thr-105, Arg-111–Phe-131, and Val-140–Tyr-160.

It belongs to the TMEM14 family.

The protein resides in the plastid. The protein localises to the chloroplast membrane. May be involved in free fatty acids export from the plastids. This Arabidopsis thaliana (Mouse-ear cress) protein is Protein FATTY ACID EXPORT 4, chloroplastic.